The following is a 31-amino-acid chain: Photosystem II reaction center protein T (31 aa).

The chain crosses the membrane as a helical span at residues 3-23 (SFAYILILAFSIGTLFFAIAL).

This sequence belongs to the PsbT family. As to quaternary structure, PSII is composed of 1 copy each of membrane proteins PsbA, PsbB, PsbC, PsbD, PsbE, PsbF, PsbH, PsbI, PsbJ, PsbK, PsbL, PsbM, PsbT, PsbX, PsbY, PsbZ, Psb30/Ycf12, peripheral proteins PsbO, CyanoQ (PsbQ), PsbU, PsbV and a large number of cofactors. It forms dimeric complexes.

The protein resides in the cellular thylakoid membrane. Functionally, found at the monomer-monomer interface of the photosystem II (PS II) dimer, plays a role in assembly and dimerization of PSII. PSII is a light-driven water plastoquinone oxidoreductase, using light energy to abstract electrons from H(2)O, generating a proton gradient subsequently used for ATP formation. The chain is Photosystem II reaction center protein T from Synechococcus sp. (strain RCC307).